A 78-amino-acid chain; its full sequence is Large ribosomal subunit protein bL28 (78 aa).

It belongs to the bacterial ribosomal protein bL28 family.

The protein is Large ribosomal subunit protein bL28 of Acidithiobacillus ferrooxidans (strain ATCC 23270 / DSM 14882 / CIP 104768 / NCIMB 8455) (Ferrobacillus ferrooxidans (strain ATCC 23270)).